A 178-amino-acid chain; its full sequence is ATP synthase subunit delta (178 aa).

It belongs to the ATPase delta chain family. As to quaternary structure, F-type ATPases have 2 components, F(1) - the catalytic core - and F(0) - the membrane proton channel. F(1) has five subunits: alpha(3), beta(3), gamma(1), delta(1), epsilon(1). F(0) has three main subunits: a(1), b(2) and c(10-14). The alpha and beta chains form an alternating ring which encloses part of the gamma chain. F(1) is attached to F(0) by a central stalk formed by the gamma and epsilon chains, while a peripheral stalk is formed by the delta and b chains.

The protein resides in the cell membrane. F(1)F(0) ATP synthase produces ATP from ADP in the presence of a proton or sodium gradient. F-type ATPases consist of two structural domains, F(1) containing the extramembraneous catalytic core and F(0) containing the membrane proton channel, linked together by a central stalk and a peripheral stalk. During catalysis, ATP synthesis in the catalytic domain of F(1) is coupled via a rotary mechanism of the central stalk subunits to proton translocation. Functionally, this protein is part of the stalk that links CF(0) to CF(1). It either transmits conformational changes from CF(0) to CF(1) or is implicated in proton conduction. The sequence is that of ATP synthase subunit delta from Desulfitobacterium hafniense (strain Y51).